Consider the following 682-residue polypeptide: Methionine--tRNA ligase (682 aa).

A 'HIGH' region motif is present at residues 15 to 25 (PYANGAIHLGH). Zn(2+) is bound by residues cysteine 146, cysteine 149, cysteine 159, and cysteine 162. The 'KMSKS' region motif lies at 331–335 (KMSKS). Residue lysine 334 participates in ATP binding. In terms of domain architecture, tRNA-binding spans 580 to 682 (DFAKLDMRVA…SGVTAGMQVK (103 aa)).

Belongs to the class-I aminoacyl-tRNA synthetase family. MetG type 1 subfamily. In terms of assembly, homodimer. Zn(2+) serves as cofactor.

It localises to the cytoplasm. The enzyme catalyses tRNA(Met) + L-methionine + ATP = L-methionyl-tRNA(Met) + AMP + diphosphate. Functionally, is required not only for elongation of protein synthesis but also for the initiation of all mRNA translation through initiator tRNA(fMet) aminoacylation. This is Methionine--tRNA ligase from Haemophilus influenzae (strain PittEE).